The chain runs to 182 residues: MFSFHERMKKKHVTIRVYKHERILVFLFVLFISTTDFSTEIIMIQTINWIVWKLFIIYISLDLFSLKLVNSEENSNSIITDEDYDHYNSSLDSSNNVKHSQEAFHRNSDPDGFPEYEFLNETSIEIKEELGQELHQLQLILDELSRRIRATPNSANKYMKNEFLMSSCIVITLNLFIFMYKS.

Residues 1–35 (MFSFHERMKKKHVTIRVYKHERILVFLFVLFISTT) form the signal peptide. N-linked (GlcNAc...) asparagine glycosylation is found at N88 and N120. A helical transmembrane segment spans residues 162–180 (EFLMSSCIVITLNLFIFMY). Residue C168 is the site of S-palmitoyl cysteine attachment.

The protein localises to the cell membrane. Major antigen in the surface tegument. The polypeptide is Antigenic integral membrane glycoprotein (Schistosoma mansoni (Blood fluke)).